The following is a 313-amino-acid chain: Solute carrier family 35 member E3 (313 aa).

The next 10 helical transmembrane spans lie at 14-34 (IIAGLLVNLLSSICIVFINKW), 40-60 (GFPNMTLTLIHFVMTWLGLFI), 77-97 (ILLLALSFCGFVVFTNLSLQS), 100-122 (IGTYQLAKVMTTPVIIAIQTMYY), 130-146 (IKLTLVPITLGVILNSY), 153-173 (LMGMIFATLGVLVTSLYQVWV), 187-207 (LLYYQAPMSSAFLLVLVPFFE), 215-235 (IFGPWSFLALFMVLLSGVIAF), 252-272 (TYNMFGHFKFCITLLGGYVLF), and 275-295 (PLSLNQGLGILCTLTGILAYT).

The protein belongs to the TPT transporter family. SLC35E subfamily.

Its subcellular location is the membrane. Functionally, putative transporter. The chain is Solute carrier family 35 member E3 (slc35e3) from Danio rerio (Zebrafish).